The primary structure comprises 510 residues: ATP synthase subunit alpha (510 aa).

169 to 176 (GDRQTGKT) contacts ATP.

It belongs to the ATPase alpha/beta chains family. F-type ATPases have 2 components, CF(1) - the catalytic core - and CF(0) - the membrane proton channel. CF(1) has five subunits: alpha(3), beta(3), gamma(1), delta(1), epsilon(1). CF(0) has three main subunits: a(1), b(2) and c(9-12). The alpha and beta chains form an alternating ring which encloses part of the gamma chain. CF(1) is attached to CF(0) by a central stalk formed by the gamma and epsilon chains, while a peripheral stalk is formed by the delta and b chains.

It localises to the cell inner membrane. The enzyme catalyses ATP + H2O + 4 H(+)(in) = ADP + phosphate + 5 H(+)(out). Functionally, produces ATP from ADP in the presence of a proton gradient across the membrane. The alpha chain is a regulatory subunit. The polypeptide is ATP synthase subunit alpha (Anaeromyxobacter sp. (strain K)).